The chain runs to 314 residues: Glutathione synthetase (314 aa).

Residues 125-311 (EKLAAQLFPQ…IAGQLFDAIE (187 aa)) form the ATP-grasp domain. 151 to 208 (FVQKQEQAILKPLDGMGGHSIFRSSNGDPNLNVILETLTDGGRTLAIAQRYLQQIIEG) serves as a coordination point for ATP. Glu282 and Asn284 together coordinate Mg(2+).

Belongs to the prokaryotic GSH synthase family. Requires Mg(2+) as cofactor. It depends on Mn(2+) as a cofactor.

The enzyme catalyses gamma-L-glutamyl-L-cysteine + glycine + ATP = glutathione + ADP + phosphate + H(+). It functions in the pathway sulfur metabolism; glutathione biosynthesis; glutathione from L-cysteine and L-glutamate: step 2/2. In Xylella fastidiosa (strain 9a5c), this protein is Glutathione synthetase.